The sequence spans 276 residues: Undecaprenyl-diphosphatase 2 (276 aa).

8 helical membrane passes run 1 to 21 (MSLWFLVFLSVLQGVTELFPV), 44 to 64 (QLLPFLVALHLGTALALLWYF), 87 to 107 (GHLMWALIIGTIPTGIVGLLL), 114 to 134 (VFHDLRIVAIALIVNGVLLWL), 150 to 170 (MTFKQAFFVGLAQIGALIPGF), 190 to 210 (AAEFSFLLGTPIIFAAGVLEL), 222 to 242 (DALLGGVLTAIAAYLSVRFLM), and 251 to 271 (LASFGVYCVIAGVFCLGWFML).

This sequence belongs to the UppP family.

It localises to the cell inner membrane. The catalysed reaction is di-trans,octa-cis-undecaprenyl diphosphate + H2O = di-trans,octa-cis-undecaprenyl phosphate + phosphate + H(+). In terms of biological role, catalyzes the dephosphorylation of undecaprenyl diphosphate (UPP). Confers resistance to bacitracin. This chain is Undecaprenyl-diphosphatase 2, found in Burkholderia lata (strain ATCC 17760 / DSM 23089 / LMG 22485 / NCIMB 9086 / R18194 / 383).